The sequence spans 566 residues: Transcription factor atf1 (566 aa).

The span at 1-42 shows a compositional bias: polar residues; the sequence is MSPSPVNTSTEPASVAAVSNGNATASSTQVPENNQSDSFAPP. Disordered regions lie at residues 1–83, 96–117, 315–345, and 357–479; these read MSPS…FVGS, SFGS…PSLS, QQQT…PQAS, and SQQF…KSFL. Residues 43 to 53 are compositionally biased toward low complexity; the sequence is SNNSQQNQQSS. Composition is skewed to polar residues over residues 65–76 and 97–106; these read ANANPADQSDGV and FGSTASVGQG. A compositionally biased stretch (low complexity) spans 107–117; it reads NPSLNRNPSLS. 2 stretches are compositionally biased toward polar residues: residues 379-412 and 421-460; these read TLRQ…TANS and TDYS…YSKG. Positions 466-479 are enriched in basic and acidic residues; it reads SKNETDEEKRKSFL. The bZIP domain occupies 472–535; the sequence is EEKRKSFLER…VSLKTLLIAH (64 aa). A basic motif region spans residues 474-503; the sequence is KRKSFLERNRQAALKCRQRKKQWLSNLQAK. The segment at 514–528 is leucine-zipper; it reads LSAQVSALREEIVSL.

Belongs to the bZIP family. As to quaternary structure, heterodimer of pcr1/mts2 and atf1/mts1. Post-translationally, phosphorylated by sty1/spc1.

It localises to the nucleus. Its function is as follows. Transcription factor required for sexual development and entry into stationary phase. Binds and activates CRE sites (cAMP-response elements, also known as M26 meiotic recombination hotspots). The protein is Transcription factor atf1 (atf1) of Schizosaccharomyces pombe (strain 972 / ATCC 24843) (Fission yeast).